A 260-amino-acid chain; its full sequence is Cobalt transport protein CbiM (260 aa).

Positions 1-34 are cleaved as a signal peptide; that stretch reads MKLGESMKKNATLSVKIIAFLGVLIFTVMPVANA. Transmembrane regions (helical) follow at residues 39-59, 77-97, 109-129, 132-152, 175-195, and 215-235; these read EGYL…PFLI, LLFA…LPSF, LSTI…VLLF, LLLA…MAVM, IFFS…IQLG, and VFAI…VLIF.

It belongs to the CbiM family. Forms an energy-coupling factor (ECF) transporter complex composed of an ATP-binding protein (A component, CbiO), a transmembrane protein (T component, CbiQ) and 2 possible substrate-capture proteins (S components, CbiM and CbiN) of unknown stoichimetry.

It localises to the cell membrane. Its pathway is cofactor biosynthesis; adenosylcobalamin biosynthesis. Functionally, part of the energy-coupling factor (ECF) transporter complex CbiMNOQ involved in cobalt import. This Clostridium cellulovorans (strain ATCC 35296 / DSM 3052 / OCM 3 / 743B) protein is Cobalt transport protein CbiM.